Consider the following 276-residue polypeptide: Energy-coupling factor transporter ATP-binding protein EcfA1 (276 aa).

In terms of domain architecture, ABC transporter spans 2–237; the sequence is IEIKNLKFKY…GSELVDLGLD (236 aa). Position 37-44 (37-44) interacts with ATP; the sequence is GHNGSGKS.

It belongs to the ABC transporter superfamily. Energy-coupling factor EcfA family. Forms a stable energy-coupling factor (ECF) transporter complex composed of 2 membrane-embedded substrate-binding proteins (S component), 2 ATP-binding proteins (A component) and 2 transmembrane proteins (T component).

It localises to the cell membrane. Its function is as follows. ATP-binding (A) component of a common energy-coupling factor (ECF) ABC-transporter complex. Unlike classic ABC transporters this ECF transporter provides the energy necessary to transport a number of different substrates. In Streptococcus thermophilus (strain CNRZ 1066), this protein is Energy-coupling factor transporter ATP-binding protein EcfA1.